The primary structure comprises 208 residues: Large ribosomal subunit protein uL3 (208 aa).

Residues 126–150 (NQSRGPMAHGSRYHRRPGSMGPVAP) form a disordered region.

The protein belongs to the universal ribosomal protein uL3 family. Part of the 50S ribosomal subunit. Forms a cluster with proteins L14 and L19.

In terms of biological role, one of the primary rRNA binding proteins, it binds directly near the 3'-end of the 23S rRNA, where it nucleates assembly of the 50S subunit. This is Large ribosomal subunit protein uL3 from Exiguobacterium sibiricum (strain DSM 17290 / CCUG 55495 / CIP 109462 / JCM 13490 / 255-15).